The following is a 967-amino-acid chain: Serine/threonine-protein kinase/endoribonuclease ire-1 (967 aa).

Residues 1 to 21 (MRATFHLFTFIFLLLFSSVIC) form the signal peptide. The Lumenal segment spans residues 22–438 (ISTPGFRNDH…LLLLNNHPIP (417 aa)). 2 N-linked (GlcNAc...) asparagine glycosylation sites follow: N100 and N188. A helical transmembrane segment spans residues 439 to 455 (FYATLVTMFALLLTVIW). Topologically, residues 456–967 (QCGRQWDQQK…IKKKSNPNTD (512 aa)) are cytoplasmic. Residues 474 to 494 (EIVNNPGESRSAQTSKQSNRG) are disordered. A compositionally biased stretch (polar residues) spans 479-494 (PGESRSAQTSKQSNRG). Positions 518–778 (YSPSDILGTG…ADAVLNHPFF (261 aa)) constitute a Protein kinase domain. Residues 524–532 (LGTGCEGTV) and K546 each bind ATP. The active-site Proton acceptor is D636. Position 672 is a phosphoserine; by autocatalysis (S672). One can recognise a KEN domain in the interval 781–909 (SEKRLAYFSD…EAVFKRYYSD (129 aa)). The tract at residues 948-967 (RTPLKLDKRNIKKKSNPNTD) is disordered. Positions 957 to 967 (NIKKKSNPNTD) are enriched in basic residues.

The protein belongs to the protein kinase superfamily. Ser/Thr protein kinase family. Requires Mg(2+) as cofactor. Post-translationally, autophosphorylated mainly on serine residues.

It localises to the endoplasmic reticulum membrane. It catalyses the reaction L-seryl-[protein] + ATP = O-phospho-L-seryl-[protein] + ADP + H(+). The enzyme catalyses L-threonyl-[protein] + ATP = O-phospho-L-threonyl-[protein] + ADP + H(+). Its activity is regulated as follows. The kinase domain is activated by trans-autophosphorylation. Kinase activity is required for activation of the endoribonuclease domain. Functionally, senses unfolded proteins in the lumen of the endoplasmic reticulum via its N-terminal domain which leads to enzyme auto-activation. The active endoribonuclease domain splices xbp-1 precursor mRNA to produce the mature form which then induces transcription of UPR target genes. Unfolded protein response (UPR) transcriptional activation by ire-1, as well as translational attenuation by pek-1 in a complementary pathway, maintains ER homeostasis. Regulates the transcriptional up-regulation of nucleoside-diphosphatase apy-1 and many other genes, upon ER stress. By activating the UPR pathway during non-lethal hypoxia pre-conditioning, confers adaptive protection to subsequent exposure to hypoxia. ire-1 and pek-1 are redundant genes that control a pathway essential for larval development and survival. Plays a role in the nuclear retention of unspliced mRNAs. The sequence is that of Serine/threonine-protein kinase/endoribonuclease ire-1 from Caenorhabditis elegans.